Consider the following 459-residue polypeptide: ATP synthase subunit beta (459 aa).

Residue 148-155 (GGAGVGKT) coordinates ATP.

This sequence belongs to the ATPase alpha/beta chains family. F-type ATPases have 2 components, CF(1) - the catalytic core - and CF(0) - the membrane proton channel. CF(1) has five subunits: alpha(3), beta(3), gamma(1), delta(1), epsilon(1). CF(0) has three main subunits: a(1), b(2) and c(9-12). The alpha and beta chains form an alternating ring which encloses part of the gamma chain. CF(1) is attached to CF(0) by a central stalk formed by the gamma and epsilon chains, while a peripheral stalk is formed by the delta and b chains.

Its subcellular location is the cell inner membrane. It carries out the reaction ATP + H2O + 4 H(+)(in) = ADP + phosphate + 5 H(+)(out). Produces ATP from ADP in the presence of a proton gradient across the membrane. The catalytic sites are hosted primarily by the beta subunits. This Cellvibrio japonicus (strain Ueda107) (Pseudomonas fluorescens subsp. cellulosa) protein is ATP synthase subunit beta.